The primary structure comprises 149 residues: Arginine repressor (149 aa).

Belongs to the ArgR family.

The protein resides in the cytoplasm. The protein operates within amino-acid biosynthesis; L-arginine biosynthesis [regulation]. Regulates arginine biosynthesis genes. The protein is Arginine repressor of Alkaliphilus metalliredigens (strain QYMF).